The chain runs to 236 residues: SERTA domain-containing protein 1 (236 aa).

Positions 1–20 (MLSKGLKRKREEEEEKEPLA) are disordered. An SERTA domain is found at 38–85 (PAVASSSLFDLSVLKLHHSLQQSEPDLRHLVLVVNTLRRIQASMAPAA). The disordered stretch occupies residues 189-211 (PASEGLKPGPEDGPGKEEAPELD). Residues 197-207 (GPEDGPGKEEA) show a composition bias toward basic and acidic residues.

Interacts with the PHD-bromodomain of TIF1, TRIM28/TIF1B and p300/CBP. Interacts with E2F1 and TFDP1; modulates transactivation activity of TFDP1/E2F complexes. Also interacts with CDK4. Polyubiquitinated, which promotes proteasomal degradation.

Its function is as follows. Acts at E2F-responsive promoters as coregulator to integrate signals provided by PHD- and/or bromodomain-containing transcription factors. Stimulates E2F1/TFDP1 transcriptional activity. Renders the activity of cyclin D1/CDK4 resistant to the inhibitory effects of CDKN2A/p16INK4A. In Homo sapiens (Human), this protein is SERTA domain-containing protein 1 (SERTAD1).